A 954-amino-acid polypeptide reads, in one-letter code: Patched domain-containing protein 3 (954 aa).

Over residues M1–K20 the composition is skewed to basic and acidic residues. The interval M1 to E103 is disordered. The segment covering Q42–S57 has biased composition (pro residues). Acidic residues predominate over residues E90–P102. A helical transmembrane segment spans residues W139–L159. N-linked (GlcNAc...) asparagine glycosylation is found at N192, N275, and N279. 7 consecutive transmembrane segments (helical) span residues L297–L317, V383–F403, F423–I443, S447–H467, A486–M506, G520–L540, and Y603–V623. The SSD domain maps to V383 to L540. Residues N678, N692, and N737 are each glycosylated (N-linked (GlcNAc...) asparagine). 5 consecutive transmembrane segments (helical) span residues V804–C824, L826–W846, L858–S878, L894–A914, and I927–L947.

This sequence belongs to the patched family. As to expression, expressed in germ cells of the testis (at protein level). Detected in blood lymph, colon, small intestine, ovary, testis, prostate, thymus and spleen with highest levels in testis.

It is found in the cell projection. It localises to the cilium. The protein localises to the flagellum membrane. The protein resides in the endoplasmic reticulum membrane. May play a role in sperm development or sperm function. However, does not appear to have an essential role in spermatogenesis or male fertility. This is Patched domain-containing protein 3 (PTCHD3) from Homo sapiens (Human).